A 207-amino-acid polypeptide reads, in one-letter code: Large ribosomal subunit protein uL3 (207 aa).

The protein belongs to the universal ribosomal protein uL3 family. Part of the 50S ribosomal subunit. Forms a cluster with proteins L14 and L19.

In terms of biological role, one of the primary rRNA binding proteins, it binds directly near the 3'-end of the 23S rRNA, where it nucleates assembly of the 50S subunit. This Thermotoga maritima (strain ATCC 43589 / DSM 3109 / JCM 10099 / NBRC 100826 / MSB8) protein is Large ribosomal subunit protein uL3.